The sequence spans 426 residues: MESLTLQPIELISGEVNLPGSKSVSNRALLLAALASGTTRLTNLLDSDDIRHMLNALTKLGVNYRLSADKTTCEVEGLGQAFHTTQPLELFLGNAGTAMRPLAAALCLGQGDYVLTGEPRMKERPIGHLVDALRQASAQIEYLEQENFPPLRIQGTGLQAGTVTIDGSISSQFLTAFLMSAPLAQGKVTIKIVGELVSKPYIDITLHIMEQFGVQVINHDYQEFVIPAGQSYVSPGQFLVEGDASSASYFLAAAAIKGGEVKVTGIGKNSIQGDIQFADALEKMGAQIEWGDDYVIARRGELNAVDLDFNHIPDAAMTIATTALFAKGTTAIRNVYNWRVKETDRLAAMATELRKVGATVEEGEDFIVITPPTKLIHAAIDTYDDHRMAMCFSLVALSDTPVTINDPKCTSKTFPDYFDKFAQLSR.

Positions 22, 23, and 27 each coordinate 3-phosphoshikimate. Lysine 22 is a phosphoenolpyruvate binding site. The phosphoenolpyruvate site is built by glycine 96 and arginine 124. Serine 170, serine 171, glutamine 172, serine 198, aspartate 314, asparagine 337, and lysine 341 together coordinate 3-phosphoshikimate. Position 172 (glutamine 172) interacts with phosphoenolpyruvate. Aspartate 314 serves as the catalytic Proton acceptor. Residues arginine 345, arginine 387, and lysine 412 each coordinate phosphoenolpyruvate.

This sequence belongs to the EPSP synthase family. Monomer.

It is found in the cytoplasm. The catalysed reaction is 3-phosphoshikimate + phosphoenolpyruvate = 5-O-(1-carboxyvinyl)-3-phosphoshikimate + phosphate. Its pathway is metabolic intermediate biosynthesis; chorismate biosynthesis; chorismate from D-erythrose 4-phosphate and phosphoenolpyruvate: step 6/7. Its function is as follows. Catalyzes the transfer of the enolpyruvyl moiety of phosphoenolpyruvate (PEP) to the 5-hydroxyl of shikimate-3-phosphate (S3P) to produce enolpyruvyl shikimate-3-phosphate and inorganic phosphate. This Vibrio cholerae serotype O1 (strain ATCC 39541 / Classical Ogawa 395 / O395) protein is 3-phosphoshikimate 1-carboxyvinyltransferase.